Consider the following 2006-residue polypeptide: Sodium channel protein type 2 subunit alpha (2006 aa).

A Phosphoserine modification is found at S4. A disordered region spans residues 28–61 (RIAEEKAKRPKQERKDEDDENGPKPNSDLEAGKS). K38 is covalently cross-linked (Glycyl lysine isopeptide (Lys-Gly) (interchain with G-Cter in SUMO1)). Residues 111 to 456 (ILTPFNPIRK…QQMLEQLKKQ (346 aa)) form an I repeat. The chain crosses the membrane as a helical span at residues 130 to 148 (LFNVLIMCTILTNCVFMTM). Residues 156–176 (KNVEYTFTGIYTFESLIKILA) form a helical membrane-spanning segment. Residues 191–208 (WNWLDFTVITFAYVTEFV) traverse the membrane as a helical segment. Residues 215-231 (ALRTFRVLRALKTISVI) form a helical membrane-spanning segment. The chain crosses the membrane as a helical span at residues 251-270 (VMILTVFCLSVFALIGLQLF). Cysteines 278 and 338 form a disulfide. Residues N285, N291, N297, N303, N308, and N340 are each glycosylated (N-linked (GlcNAc...) asparagine). An intramembrane region (pore-forming) is located at residues 370-394 (FSWAFLSLFRLMTQDFWENLYQLTL). A helical membrane pass occupies residues 402–422 (MIFFVLVIFLGSFYLINLILA). Residues S468, S471, S484, S526, S528, S531, S553, S554, S558, S573, S576, S589, S610, S623, S687, S688, and S722 each carry the phosphoserine modification. The segment at 494-529 (SSKSEKELKNRRKKKKQKEQAGEEEKEDAVRKSASE) is disordered. Positions 511–529 (KEQAGEEEKEDAVRKSASE) are enriched in basic and acidic residues. Positions 589–635 (SENDFADDEHSTFEDNDSRRDSLFVPHRHGERRPSNVSQASRASRGI) are disordered. Positions 596–610 (DEHSTFEDNDSRRDS) are enriched in basic and acidic residues. An II repeat occupies 742 to 1014 (CCKPWLKVKH…QIAVGRMQKG (273 aa)). The chain crosses the membrane as a helical span at residues 761–779 (FVDLAITICIVLNTLFMAM). Residues 791–810 (VLSVGNLVFTGIFTAEMFLK) traverse the membrane as a helical segment. The chain crosses the membrane as a helical span at residues 825–844 (NIFDGFIVSLSLMELGLANV). The helical transmembrane segment at 847 to 864 (LSVLRSFRLLRVFKLAKS) threads the bilayer. A helical transmembrane segment spans residues 881–899 (ALGNLTLVLAIIVFIFAVV). Residues C913 and C919 are joined by a disulfide bond. The segment at 918-919 (DC) is binds SCN2B. Residues 929–949 (FFHSFLIVFRVLCGEWIETMW) constitute an intramembrane region (pore-forming). A disulfide bond links C951 and C960. A helical transmembrane segment spans residues 963-983 (VFMMVMVIGNLVVLNLFLALL). Positions 1121-1167 (EEFSSESDMEESKEKLNATSSSEGSTVDIGAPAEGEQPEAEPEESLE) are disordered. The span at 1156–1167 (EQPEAEPEESLE) shows a compositional bias: acidic residues. One copy of the III repeat lies at 1191-1505 (KGKLWWNLRK…KKYYNAMKKL (315 aa)). Residues 1211 to 1228 (FETFIVFMILLSSGALAF) traverse the membrane as a helical segment. The helical transmembrane segment at 1242 to 1260 (MLEYADKVFTYIFILEMLL) threads the bilayer. A helical membrane pass occupies residues 1275–1293 (WCWLDFLIVDVSLVSLTAN). Residues 1302–1320 (AIKSLRTLRALRPLRALSR) traverse the membrane as a helical segment. The helical transmembrane segment at 1338 to 1357 (IMNVLLVCLIFWLIFSIMGV) threads the bilayer. A disulfide bond links C1367 and C1387. An intramembrane region (pore-forming) is located at residues 1410-1431 (GLGYLSLLQVATFKGWMDIMYA). A helical membrane pass occupies residues 1449–1470 (YMYLYFVIFIIFGSFFTLNLFI). At S1507 the chain carries Phosphoserine. Residues 1514-1812 (IPRPANKFQG…WEKFDPDATQ (299 aa)) form an IV repeat. Residues 1534–1551 (FDISIMILICLNMVTMMV) traverse the membrane as a helical segment. A helical transmembrane segment spans residues 1563–1581 (ILYWINLVFIVLFTGECVL). The chain crosses the membrane as a helical span at residues 1594 to 1611 (GWNIFDFVVVILSIVGMF). The chain crosses the membrane as a helical span at residues 1625 to 1641 (LFRVIRLARIGRILRLI). A helical transmembrane segment spans residues 1661-1678 (LFNIGLLLFLVMFIYAIF). The segment at residues 1701 to 1723 (FGNSMICLFQITTSAGWDGLLAP) is an intramembrane region (pore-forming). C1732 and C1747 are joined by a disulfide. The chain crosses the membrane as a helical span at residues 1754 to 1776 (IFFFVSYIIISFLVVVNMYIAVI). The IQ domain occupies 1906-1935 (EEVSAIVIQRAYRRYLLKQKVKKVSSIYKK). At S1931 the chain carries Phosphoserine. Positions 1934-1965 (KKDKGKEDEGTPIKEDIITDKLNENSTPEKTD) are enriched in basic and acidic residues. Residues 1934–2006 (KKDKGKEDEG…KGKDIRESKK (73 aa)) are disordered. 3 positions are modified to phosphothreonine: T1944, T1964, and T1967. A Phosphoserine modification is found at S1972. The segment covering 1980–2006 (TKPEKEKFEKDKSEKEDKGKDIRESKK) has biased composition (basic and acidic residues).

Belongs to the sodium channel (TC 1.A.1.10) family. Nav1.2/SCN2A subfamily. In terms of assembly, heterooligomer of a large alpha subunit and a smaller beta subunit. Heterooligomer with SCN2B or SCN4B; disulfide-linked. Interacts with NEDD4L. Interacts with CALM. Interacts with TMEM233. Post-translationally, sumoylated at Lys-38. Sumoylation is induced by hypoxia, increases voltage-gated sodium current and mediates the early response to acute hypoxia in neurons. Sumoylated SCN2A is located at the cell membrane. In terms of tissue distribution, expressed in brain (at protein level). Detected in hippocampus, cortex and brain stem.

It is found in the cell membrane. The catalysed reaction is Na(+)(in) = Na(+)(out). Its function is as follows. Mediates the voltage-dependent sodium ion permeability of excitable membranes. Assuming opened or closed conformations in response to the voltage difference across the membrane, the protein forms a sodium-selective channel through which Na(+) ions may pass in accordance with their electrochemical gradient. Implicated in the regulation of hippocampal replay occurring within sharp wave ripples (SPW-R) important for memory. The protein is Sodium channel protein type 2 subunit alpha of Mus musculus (Mouse).